We begin with the raw amino-acid sequence, 512 residues long: Bifunctional purine biosynthesis protein PurH (512 aa).

Positions M1–V146 constitute an MGS-like domain.

This sequence belongs to the PurH family.

The catalysed reaction is (6R)-10-formyltetrahydrofolate + 5-amino-1-(5-phospho-beta-D-ribosyl)imidazole-4-carboxamide = 5-formamido-1-(5-phospho-D-ribosyl)imidazole-4-carboxamide + (6S)-5,6,7,8-tetrahydrofolate. It carries out the reaction IMP + H2O = 5-formamido-1-(5-phospho-D-ribosyl)imidazole-4-carboxamide. The protein operates within purine metabolism; IMP biosynthesis via de novo pathway; 5-formamido-1-(5-phospho-D-ribosyl)imidazole-4-carboxamide from 5-amino-1-(5-phospho-D-ribosyl)imidazole-4-carboxamide (10-formyl THF route): step 1/1. It participates in purine metabolism; IMP biosynthesis via de novo pathway; IMP from 5-formamido-1-(5-phospho-D-ribosyl)imidazole-4-carboxamide: step 1/1. The sequence is that of Bifunctional purine biosynthesis protein PurH from Bacillus subtilis (strain 168).